A 494-amino-acid polypeptide reads, in one-letter code: Alpha-amylase B (494 aa).

A signal peptide spans 1 to 18 (MFLAKSIVCLALLAVANA). Q19 is subject to Pyrrolidone carboxylic acid. C46 and C102 are disulfide-bonded. Ca(2+) contacts are provided by N116, R165, and D174. A disulfide bridge connects residues C153 and C167. R202 lines the chloride pocket. The active-site Nucleophile is D204. Ca(2+) is bound at residue H208. E241 acts as the Proton donor in catalysis. Chloride contacts are provided by N304 and R343. Cystine bridges form between C376/C382 and C448/C460.

The protein belongs to the glycosyl hydrolase 13 family. As to quaternary structure, monomer. It depends on Ca(2+) as a cofactor. The cofactor is chloride.

The catalysed reaction is Endohydrolysis of (1-&gt;4)-alpha-D-glucosidic linkages in polysaccharides containing three or more (1-&gt;4)-alpha-linked D-glucose units.. This Drosophila melanogaster (Fruit fly) protein is Alpha-amylase B (Amy-d).